A 154-amino-acid polypeptide reads, in one-letter code: Endoribonuclease YbeY (154 aa).

His120, His124, and His130 together coordinate Zn(2+).

It belongs to the endoribonuclease YbeY family. Zn(2+) serves as cofactor.

Its subcellular location is the cytoplasm. Its function is as follows. Single strand-specific metallo-endoribonuclease involved in late-stage 70S ribosome quality control and in maturation of the 3' terminus of the 16S rRNA. The sequence is that of Endoribonuclease YbeY from Leptospira biflexa serovar Patoc (strain Patoc 1 / Ames).